The following is a 332-amino-acid chain: Methionyl-tRNA formyltransferase (332 aa).

124-127 (SLLP) lines the (6S)-5,6,7,8-tetrahydrofolate pocket.

Belongs to the Fmt family.

The enzyme catalyses L-methionyl-tRNA(fMet) + (6R)-10-formyltetrahydrofolate = N-formyl-L-methionyl-tRNA(fMet) + (6S)-5,6,7,8-tetrahydrofolate + H(+). Functionally, attaches a formyl group to the free amino group of methionyl-tRNA(fMet). The formyl group appears to play a dual role in the initiator identity of N-formylmethionyl-tRNA by promoting its recognition by IF2 and preventing the misappropriation of this tRNA by the elongation apparatus. This Polynucleobacter asymbioticus (strain DSM 18221 / CIP 109841 / QLW-P1DMWA-1) (Polynucleobacter necessarius subsp. asymbioticus) protein is Methionyl-tRNA formyltransferase.